Here is a 200-residue protein sequence, read N- to C-terminus: MTIRYPNGKRYDQASQPHKTPIKKHTYSNRGMSLEEELNDTNQYYLTHNIACVHKKPTPLQIVKVDYPARSAAVVKEAYFKQPSTTDYNGVYKGKYIDFEAKETKNKTSFPLQNFHLHQIEHMKQVVAHNGIAFVIIKFTLFDEFYLLDAKHIIAFWNRQNTGGRKSITKQEIEEHGSLLSCGYHPRIDYIRVLDTVYFS.

Residues 1-24 form a disordered region; the sequence is MTIRYPNGKRYDQASQPHKTPIKK. Positions 85, 87, 100, and 119 each coordinate Mg(2+).

This sequence belongs to the RecU family. Requires Mg(2+) as cofactor.

Its subcellular location is the cytoplasm. It carries out the reaction Endonucleolytic cleavage at a junction such as a reciprocal single-stranded crossover between two homologous DNA duplexes (Holliday junction).. Its function is as follows. Endonuclease that resolves Holliday junction intermediates in genetic recombination. Cleaves mobile four-strand junctions by introducing symmetrical nicks in paired strands. Promotes annealing of linear ssDNA with homologous dsDNA. Required for DNA repair, homologous recombination and chromosome segregation. This chain is Holliday junction resolvase RecU, found in Bacillus mycoides (strain KBAB4) (Bacillus weihenstephanensis).